Here is a 572-residue protein sequence, read N- to C-terminus: Urease subunit alpha (572 aa).

In terms of domain architecture, Urease spans 130-572 (GGVDTHIHFI…LPMAQRYFLF (443 aa)). Residues H135, H137, and K218 each contribute to the Ni(2+) site. Residue K218 is modified to N6-carboxylysine. H220 serves as a coordination point for substrate. The Ni(2+) site is built by H247 and H273. H321 serves as the catalytic Proton donor. D361 is a binding site for Ni(2+).

This sequence belongs to the metallo-dependent hydrolases superfamily. Urease alpha subunit family. In terms of assembly, heterotrimer of UreA (gamma), UreB (beta) and UreC (alpha) subunits. Three heterotrimers associate to form the active enzyme. The cofactor is Ni cation. Carboxylation allows a single lysine to coordinate two nickel ions.

The protein resides in the cytoplasm. It catalyses the reaction urea + 2 H2O + H(+) = hydrogencarbonate + 2 NH4(+). It functions in the pathway nitrogen metabolism; urea degradation; CO(2) and NH(3) from urea (urease route): step 1/1. The protein is Urease subunit alpha of Ralstonia nicotianae (strain ATCC BAA-1114 / GMI1000) (Ralstonia solanacearum).